The sequence spans 327 residues: Protein CONSERVED IN THE GREEN LINEAGE AND DIATOMS 27, chloroplastic (327 aa).

Residues 1–59 (MLRLIVNYPLIPKISHRVCSNSSSKLGSYYDSSSIIKYGGISDVVGKKQELFLSVSVKA) constitute a chloroplast transit peptide. Residues 66–88 (NGGGSMSFSGQSWDPSSEIEVPS) form a disordered region. A run of 3 helical transmembrane segments spans residues 119-139 (LGGL…AASF), 148-168 (FILA…LRIY), and 225-245 (LIGT…ATPV).

As to expression, mostly expressed in seeds, leaves and flowers, and, to a lower extent, in roots.

The protein resides in the membrane. It localises to the plastid. Its subcellular location is the chloroplast. In terms of biological role, required for growth in low iron conditions. This chain is Protein CONSERVED IN THE GREEN LINEAGE AND DIATOMS 27, chloroplastic, found in Arabidopsis thaliana (Mouse-ear cress).